The following is a 232-amino-acid chain: dITP/XTP pyrophosphatase (232 aa).

10 to 15 lines the substrate pocket; sequence TRNKGK. Residue Asp-72 is the Proton acceptor of the active site. Asp-72 contributes to the Mg(2+) binding site. Residues Ser-73, 153–156, Lys-176, and 181–182 each bind substrate; these read FGYD and HR.

Belongs to the HAM1 NTPase family. Homodimer. Mg(2+) serves as cofactor.

It carries out the reaction XTP + H2O = XMP + diphosphate + H(+). The enzyme catalyses dITP + H2O = dIMP + diphosphate + H(+). The catalysed reaction is ITP + H2O = IMP + diphosphate + H(+). Functionally, pyrophosphatase that catalyzes the hydrolysis of nucleoside triphosphates to their monophosphate derivatives, with a high preference for the non-canonical purine nucleotides XTP (xanthosine triphosphate), dITP (deoxyinosine triphosphate) and ITP. Seems to function as a house-cleaning enzyme that removes non-canonical purine nucleotides from the nucleotide pool, thus preventing their incorporation into DNA/RNA and avoiding chromosomal lesions. The polypeptide is dITP/XTP pyrophosphatase (Syntrophobacter fumaroxidans (strain DSM 10017 / MPOB)).